Reading from the N-terminus, the 394-residue chain is Stearoyl-[acyl-carrier-protein] 9-desaturase 1, chloroplastic (394 aa).

A chloroplast-targeting transit peptide spans 1-37 (MVMAMDRIALFSSSSSVYHHGSSHSHGSKSSRVFTIR). 6 residues coordinate Fe cation: E135, E173, H176, E226, E259, and H262.

The protein belongs to the fatty acid desaturase type 2 family. Homodimer. Fe(2+) serves as cofactor. In terms of tissue distribution, ubiquitously expressed.

It is found in the plastid. The protein localises to the chloroplast. The enzyme catalyses octadecanoyl-[ACP] + 2 reduced [2Fe-2S]-[ferredoxin] + O2 + 2 H(+) = (9Z)-octadecenoyl-[ACP] + 2 oxidized [2Fe-2S]-[ferredoxin] + 2 H2O. It functions in the pathway lipid metabolism; fatty acid metabolism. Functionally, converts stearoyl-ACP to oleoyl-ACP by introduction of a cis double bond between carbons 9 and 10 of the acyl chain. This Arabidopsis thaliana (Mouse-ear cress) protein is Stearoyl-[acyl-carrier-protein] 9-desaturase 1, chloroplastic (S-ACP-DES1).